Consider the following 139-residue polypeptide: Peptide methionine sulfoxide reductase MsrB (139 aa).

The MsrB domain occupies 8–130; the sequence is DQEWRQQLTD…NSASLRFHSA (123 aa). Positions 47, 50, 96, and 99 each coordinate Zn(2+). Cys-119 functions as the Nucleophile in the catalytic mechanism.

Belongs to the MsrB Met sulfoxide reductase family. The cofactor is Zn(2+).

The catalysed reaction is L-methionyl-[protein] + [thioredoxin]-disulfide + H2O = L-methionyl-(R)-S-oxide-[protein] + [thioredoxin]-dithiol. The protein is Peptide methionine sulfoxide reductase MsrB of Hahella chejuensis (strain KCTC 2396).